We begin with the raw amino-acid sequence, 1032 residues long: Suppression of tumorigenicity 18 protein (1032 aa).

Disordered regions lie at residues 29-76 (RAEE…TNDH), 162-213 (GRDK…LTYN), and 325-354 (RQPK…AKCP). Residues 40–51 (NKRKSLLMKPRH) show a composition bias toward basic residues. Residues 52–76 (YSPDMDCKENPDNRNEDDGLETNDH) show a composition bias toward basic and acidic residues. 6 consecutive CCHHC-type zinc fingers follow at residues 344-387 (PRPE…PLEI), 388-431 (LAMH…KLAM), 700-743 (RDLK…LKSL), 744-787 (MAAN…GIKM), 792-835 (EEKE…QKEN), and 845-888 (KLNK…IKKV). 24 residues coordinate Zn(2+): C353, C358, H371, C377, C397, C402, H415, C421, C709, C714, H727, C733, C753, C758, H771, C777, C801, C806, H819, C825, C854, C859, H872, and C878. Positions 905 to 974 (IEGDEEIRHL…KELAGLSQAL (70 aa)) form a coiled coil.

It belongs to the MYT1 family. As to expression, detected in brain.

It is found in the nucleus. Repressor that binds to DNA sequences containing a bipartite element consisting of a direct repeat of the sequence 5'-AAAGTTT-3' separated by 2-9 nucleotides. Represses basal transcription activity from target promoters. The polypeptide is Suppression of tumorigenicity 18 protein (St18) (Rattus norvegicus (Rat)).